A 318-amino-acid polypeptide reads, in one-letter code: Thymidylate synthase (318 aa).

Residues R25 and 180 to 181 contribute to the dUMP site; that span reads RR. C200 functions as the Nucleophile in the catalytic mechanism. DUMP is bound by residues 220–223, N231, and 261–263; these read RSGD and HIY. Residue D223 coordinates (6R)-5,10-methylene-5,6,7,8-tetrahydrofolate. Residue A317 participates in (6R)-5,10-methylene-5,6,7,8-tetrahydrofolate binding.

It belongs to the thymidylate synthase family. Bacterial-type ThyA subfamily. In terms of assembly, homodimer.

The protein resides in the cytoplasm. The enzyme catalyses dUMP + (6R)-5,10-methylene-5,6,7,8-tetrahydrofolate = 7,8-dihydrofolate + dTMP. It participates in pyrimidine metabolism; dTTP biosynthesis. In terms of biological role, catalyzes the reductive methylation of 2'-deoxyuridine-5'-monophosphate (dUMP) to 2'-deoxythymidine-5'-monophosphate (dTMP) while utilizing 5,10-methylenetetrahydrofolate (mTHF) as the methyl donor and reductant in the reaction, yielding dihydrofolate (DHF) as a by-product. This enzymatic reaction provides an intracellular de novo source of dTMP, an essential precursor for DNA biosynthesis. This is Thymidylate synthase from Bacillus thuringiensis subsp. konkukian (strain 97-27).